The primary structure comprises 395 residues: Protein maternal effect lethal 26 (395 aa).

The 122-residue stretch at 41–162 folds into the MATH domain; that stretch reads KVQHTWTVKN…RDMIIVNVEI (122 aa). The region spanning 201–269 is the BTB domain; that stretch reads CDFAINVNGK…IYCGRCNKDI (69 aa).

Interacts (via BTB domain) with cul-3. Seems to be a component of a E3 ubiquitin-protein ligase complex containing cul-3. Interacts (probably via MATH domain) with mei-1, which targets mei-1 for ubiquitin-mediated proteolysis. Interacts (probably via MATH domain) with ppfr-1, the regulatory subunit of the PP4 complex; targets ppfr-1 for ubiquitin-mediated proteolysis. May interact (via MATH domain) with unc-89 (via Ig-like C2-type domain 2/3 and, Ig-like C2-type domain 50 and fibronectin type-III domain 2). In terms of tissue distribution, expressed in body wall muscles.

The protein resides in the cytoplasm. It localises to the myofibril. It is found in the sarcomere. Its subcellular location is the m line. The protein localises to the i band. Its pathway is protein modification; protein ubiquitination. Its function is as follows. Probable substrate-specific adapter of an E3 ubiquitin-protein ligase complex which mediates the ubiquitination and subsequent proteasomal degradation of target proteins. Controls degradation of microtubule severing protein mei-1 after meiosis. Controls degradation of ppfr-1, the regulatory subunit of PP4 complex, after meiosis. In body wall muscles, involved in the organization of myosin thick filaments, likely by regulating the degradation of mei-1 downstream of unc-89. May also activate the TORC1 pathway. In Caenorhabditis elegans, this protein is Protein maternal effect lethal 26 (mel-26).